We begin with the raw amino-acid sequence, 477 residues long: MTDNAEILEPQGDHHAWFSLQPFLEAGKWSSTPGTYFKEMKEKNGGAPIYKAHPGLKVITITDHASGKWFFNQPDTVLDRQKGQRFGPLKCKEEYLGKGLPALVTNAMEKHEGARDYIVAVLRERLAATDTTLEHATANFYKDLWANGMGDYTTVYDLFLQQSYAFVLEWIFGMGEEGGQPLPPYKDFLTVNPADLSVLIGLEVDTPVANLVSMVAQAVAGGVSSEEKASIEVLLEAIRSSKMWPSFTKMLEESGLPTQDMDKMFMFFSGFQSSSALAKNMEYCVGSLAANPDFLAELRAELDGQELTIKSVSDAKRFPLLDSFHWEILRLYPAPQFFFKTAQMDLVVPTSSGARYQVRKGDMLCCHHPLIHIDEAVFGADATEFKPKRFIGNPGLKDDVFAYAFPKPSEPGRVGGMPWGCAAHTVGVLDGILKVFYGRWVQEAEWEMKEPPIIDPVEYLGVVGPDGLGFAKVTPRK.

Heme is bound at residue cysteine 421.

It belongs to the cytochrome P450 family. The cofactor is heme.

It carries out the reaction (9S)-hydroperoxy-(10E,12Z)-octadecadienoate = (11S)-hydroxy-(9S,10S)-epoxy-(12Z)-octadecenoate. It catalyses the reaction (13S)-hydroperoxy-(9Z,11E)-octadecadienoate = 11-hydroxy-12,13-epoxy-(9Z)-octadecenoate. It functions in the pathway lipid metabolism; oxylipin biosynthesis. Its function is as follows. Cytochrome P450 epoxyalcohol synthase involved in the metabolism of oxylipins 'ectocarpins' natural products, such as hybridalactone, ecklonilactones and derivatives. Isomerizes the hydroperoxides into epoxyalcohols via epoxyallylic radical. Can use linoleic acid 9-hydroperoxide ((9S,10E,12Z)-9-hydroperoxy-10,12-octadecadienoic, 9-HPOD) as preferred substrate to produce (9S,10S,11S,12Z)-9,10-epoxy-11-hydroxy-12-octadecenoic acid and, to a lower extent, active with linoleate 13-hydroperoxide ((9Z,11E,13S)-13-hydroperoxy-9,11-octadecadienoic, 13-HPOD) to produce 11-hydroxy-12,13-epoxy-9-octadecenoic acid. No activity toward alpha-linolenic acid 9- and 13-hydroperoxides, and toward eicosapentaenoic acid 15-hydroperoxide. In Ectocarpus siliculosus (Brown alga), this protein is Epoxyalcohol synthase CYP5164B1.